The sequence spans 1006 residues: Kinesin-like protein KIN-5C (1006 aa).

The region spanning 9–355 is the Kinesin motor domain; it reads NVQVLLRCRP…LDYAHRAKNI (347 aa). 95 to 102 contacts ATP; sequence GQTGTGKT. Residues 371–522 adopt a coiled-coil conformation; that stretch reads IKDLYGEIER…NASLFQKIAR (152 aa).

Belongs to the TRAFAC class myosin-kinesin ATPase superfamily. Kinesin family. KIN-5/BimC subfamily.

It localises to the cytoplasm. It is found in the cytoskeleton. Its subcellular location is the spindle. In terms of biological role, responsible for microtubule translocation. May be important for the organization of phragmoplast-specific arrays of microtubules. Plays an essential role in stabilizing the mitotic spindle. Required during mitotic cytokinesis. The polypeptide is Kinesin-like protein KIN-5C (Nicotiana tabacum (Common tobacco)).